The sequence spans 131 residues: Maturin (131 aa).

Residues 107-120 show a composition bias toward acidic residues; the sequence is FEEYNADVEEEEPE. The segment at 107–131 is disordered; that stretch reads FEEYNADVEEEEPEADHQQMGVSQQ.

Belongs to the MTURN family.

The protein localises to the cytoplasm. Its function is as follows. Involved in early neuronal development; required for cell cycle exit and differentiation of primary neurons. Cooperates synergistically with pak3 to promote primary neural differentiation within the neural plate. May play a role in promoting megakaryocyte differentiation. This chain is Maturin (mturn), found in Xenopus laevis (African clawed frog).